The primary structure comprises 156 residues: 6,7-dimethyl-8-ribityllumazine synthase (156 aa).

5-amino-6-(D-ribitylamino)uracil-binding positions include Phe23, 57 to 59, and 81 to 83; these read AYE and AII. Position 86-87 (86-87) interacts with (2S)-2-hydroxy-3-oxobutyl phosphate; sequence GT. The Proton donor role is filled by His89. Phe114 serves as a coordination point for 5-amino-6-(D-ribitylamino)uracil. Position 128 (Arg128) interacts with (2S)-2-hydroxy-3-oxobutyl phosphate.

The protein belongs to the DMRL synthase family.

The enzyme catalyses (2S)-2-hydroxy-3-oxobutyl phosphate + 5-amino-6-(D-ribitylamino)uracil = 6,7-dimethyl-8-(1-D-ribityl)lumazine + phosphate + 2 H2O + H(+). The protein operates within cofactor biosynthesis; riboflavin biosynthesis; riboflavin from 2-hydroxy-3-oxobutyl phosphate and 5-amino-6-(D-ribitylamino)uracil: step 1/2. In terms of biological role, catalyzes the formation of 6,7-dimethyl-8-ribityllumazine by condensation of 5-amino-6-(D-ribitylamino)uracil with 3,4-dihydroxy-2-butanone 4-phosphate. This is the penultimate step in the biosynthesis of riboflavin. This is 6,7-dimethyl-8-ribityllumazine synthase from Helicobacter pylori (strain P12).